The sequence spans 1382 residues: Hepatocyte growth factor receptor (1382 aa).

Residues Met-1–Gly-24 form the signal peptide. The Extracellular segment spans residues Glu-25–Leu-935. Positions Glu-27 to Leu-516 constitute a Sema domain. A glycan (N-linked (GlcNAc...) asparagine) is linked at Asn-45. 4 disulfide bridges follow: Cys-95-Cys-101, Cys-98-Cys-160, Cys-133-Cys-141, and Cys-173-Cys-176. Residue Asn-106 is glycosylated (N-linked (GlcNAc...) asparagine). N-linked (GlcNAc...) asparagine glycans are attached at residues Asn-203 and Asn-359. 2 disulfides stabilise this stretch: Cys-299/Cys-364 and Cys-386/Cys-398. 3 N-linked (GlcNAc...) asparagine glycosylation sites follow: Asn-400, Asn-406, and Asn-450. 4 disulfide bridges follow: Cys-521/Cys-539, Cys-527/Cys-562, Cys-530/Cys-546, and Cys-542/Cys-552. IPT/TIG domains are found at residues Pro-564–Val-656, Pro-658–Gln-740, and Pro-743–Val-837. Thr-583 carries an O-linked (Man) threonine glycan. N-linked (GlcNAc...) asparagine glycans are attached at residues Asn-608 and Asn-636. Residue Thr-677 is glycosylated (O-linked (Man) threonine). An N-linked (GlcNAc...) asparagine glycan is attached at Asn-751. The O-linked (Man) threonine glycan is linked to Thr-762. Residues Asn-786, Asn-880, and Asn-931 are each glycosylated (N-linked (GlcNAc...) asparagine). The chain crosses the membrane as a helical span at residues Ile-936 to Leu-956. The Cytoplasmic segment spans residues Lys-957–Thr-1382. At Ser-967 the chain carries Phosphoserine. Residue Thr-978 is modified to Phosphothreonine. Phosphoserine occurs at positions 991, 998, and 1001. Phosphotyrosine is present on Tyr-1004. The Protein kinase domain maps to Val-1079–Ile-1346. ATP is bound by residues Ile-1085–Val-1093 and Lys-1111. Residue Asp-1205 is the Proton acceptor of the active site. The interval Leu-1213–Thr-1382 is interaction with RANBP9. Tyr-1231 carries the post-translational modification Phosphotyrosine. A phosphotyrosine; by autocatalysis mark is found at Tyr-1235 and Tyr-1236. Residue Thr-1290 is modified to Phosphothreonine. The tract at residues Trp-1321–Val-1360 is interaction with MUC20. Phosphotyrosine; by autocatalysis occurs at positions 1350 and 1357. The residue at position 1366 (Tyr-1366) is a Phosphotyrosine.

It belongs to the protein kinase superfamily. Tyr protein kinase family. As to quaternary structure, heterodimer made of an alpha chain (50 kDa) and a beta chain (145 kDa) which are disulfide linked. Binds PLXNB1. Interacts when phosphorylated with downstream effectors including STAT3, PIK3R1, SRC, PCLG1, GRB2 and GAB1. Interacts with SPSB1, SPSB2 and SPSB4. Interacts with INPP5D/SHIP1. When phosphorylated at Tyr-1357, interacts with INPPL1/SHIP2. Interacts with RANBP9 and RANBP10, as well as SPSB1, SPSB2, SPSB3 and SPSB4. SPSB1 binding occurs in the presence and in the absence of HGF, however HGF treatment has a positive effect on this interaction. Interacts with MUC20; prevents interaction with GRB2 and suppresses hepatocyte growth factor-induced cell proliferation. Interacts with GRB10. Interacts with PTPN1 and PTPN2. Interacts with HSP90AA1 and HSP90AB1; the interaction suppresses MET kinase activity. Interacts with tensin TNS3. Interacts (when phosphorylated) with tensin TNS4 (via SH2 domain); the interaction increases MET protein stability by inhibiting MET endocytosis and subsequent lysosomal degradation. Post-translationally, autophosphorylated in response to ligand binding on Tyr-1235 and Tyr-1236 in the kinase domain leading to further phosphorylation of Tyr-1350 and Tyr-1357 in the C-terminal multifunctional docking site. Dephosphorylated by PTPRJ at Tyr-1350 and Tyr-1366. Dephosphorylated by PTPN1 and PTPN2. Ubiquitinated. Ubiquitination by CBL regulates the receptor stability and activity through proteasomal degradation. In terms of processing, O-mannosylation of IPT/TIG domains by TMEM260 is required for protein maturation. O-mannosylated residues are composed of single mannose glycans that are not elongated or modified.

It is found in the membrane. It catalyses the reaction L-tyrosyl-[protein] + ATP = O-phospho-L-tyrosyl-[protein] + ADP + H(+). In its inactive state, the C-terminal tail interacts with the catalytic domain and inhibits the kinase activity. Upon ligand binding, the C-terminal tail is displaced and becomes phosphorylated, thus increasing the kinase activity. In terms of biological role, receptor tyrosine kinase that transduces signals from the extracellular matrix into the cytoplasm by binding to hepatocyte growth factor/HGF ligand. Regulates many physiological processes including proliferation, scattering, morphogenesis and survival. Ligand binding at the cell surface induces autophosphorylation of MET on its intracellular domain that provides docking sites for downstream signaling molecules. Following activation by ligand, interacts with the PI3-kinase subunit PIK3R1, PLCG1, SRC, GRB2, STAT3 or the adapter GAB1. Recruitment of these downstream effectors by MET leads to the activation of several signaling cascades including the RAS-ERK, PI3 kinase-AKT, or PLCgamma-PKC. The RAS-ERK activation is associated with the morphogenetic effects while PI3K/AKT coordinates prosurvival effects. During embryonic development, MET signaling plays a role in gastrulation, development and migration of muscles and neuronal precursors, angiogenesis and kidney formation. In adults, participates in wound healing as well as organ regeneration and tissue remodeling. Also promotes differentiation and proliferation of hematopoietic cells. This chain is Hepatocyte growth factor receptor (MET), found in Loxodonta africana (African elephant).